Here is a 324-residue protein sequence, read N- to C-terminus: THUMP domain-containing protein 1 homolog (324 aa).

Disordered regions lie at residues 1-24 (MEPA…KKYF) and 67-104 (SEKP…DDDD). The segment covering 68–80 (EKPENEPEKKQPE) has biased composition (basic and acidic residues). Thr99 is subject to Phosphothreonine. Phosphoserine is present on Ser100. Residues 154–260 (DIATTGKSMS…RGWCLLSVID (107 aa)) enclose the THUMP domain. A disordered region spans residues 275–324 (NPSDKKSSGEGDSKSETSEVANGNDKEQAESSEESKSNDDENKDSTENDK). Composition is skewed to basic and acidic residues over residues 277-291 (SDKK…KSET) and 298-324 (NDKE…ENDK).

This sequence belongs to the THUMPD1 family.

This chain is THUMP domain-containing protein 1 homolog, found in Drosophila melanogaster (Fruit fly).